Consider the following 493-residue polypeptide: MAKIMIQGTASSVGKSLIVAALCRIFKQDGYSVCPFKSQNMSLNSYITLDGKEMGRAQVLQAYAAGLEPEAYMNPILLKPTSDKKSQIIVNGKVYGNSTAMEYHNLKIKFKDMLKEQFEKLEEDFDIVVMEGAGSPAEINLRDRDIVNMGMAELVDAPVLLVGDIDKGGVFASLAGTMLLLNEGEKERVKGTIINKFRGDVEILKPGLDMLEDIIHIPCLGVVPYTRLQLEDEDGAVEFNKKAYAPIDIAVIKMPHISNFTDLDALKSEEDVSIRFVTSKEEFKEPDLLIIPGSKNTIEDLLYLRQCGLEERIKEYSREGKIIGICGGYQVLGSKIKDPYKVETDLGEIDGLNLLDMETTFEKEKVTTRVSAKLLNEETKNTVYGYEIHMGISKYGENIKPLFKIYDKNGEKVDYFDGAINEKGNVMGTYIHGVFDGVVFREKIINELRVKKGLKKKKSQMYEHMREKELDKLADIVRQSLDMEKIYSIIGMK.

A GATase cobBQ-type domain is found at 246 to 440 (PIDIAVIKMP…IHGVFDGVVF (195 aa)). Cysteine 326 (nucleophile) is an active-site residue. Histidine 432 is an active-site residue.

Belongs to the CobB/CobQ family. CobQ subfamily.

The protein operates within cofactor biosynthesis; adenosylcobalamin biosynthesis. In terms of biological role, catalyzes amidations at positions B, D, E, and G on adenosylcobyrinic A,C-diamide. NH(2) groups are provided by glutamine, and one molecule of ATP is hydrogenolyzed for each amidation. The sequence is that of Cobyric acid synthase from Clostridium botulinum (strain ATCC 19397 / Type A).